Here is a 149-residue protein sequence, read N- to C-terminus: Protein E6 (149 aa).

Zinc fingers lie at residues 30–66 (CVYC…CTKC) and 103–139 (CITC…CIAC). A PDZ-binding domain motif is present at residues 147-149 (TQV).

The protein belongs to the papillomaviridae E6 protein family. Forms homodimers. Interacts with ubiquitin-protein ligase UBE3A/E6-AP and thus forms a complex with human TP53. Interacts with human NFX1 and MAGI3. Interacts with human IRF3; this interaction inhibits the establishment of antiviral state. Interacts with human TYK2; this interaction inhibits JAK-STAT activation by interferon alpha. Interacts with host DLG1; this interaction leads to the proteasomal degradation of DLG1.

Its subcellular location is the host cytoplasm. It localises to the host nucleus. Its function is as follows. Plays a major role in the induction and maintenance of cellular transformation. Acts mainly as an oncoprotein by stimulating the destruction of many host cell key regulatory proteins. E6 associates with host UBE3A/E6-AP ubiquitin-protein ligase, and inactivates tumor suppressors TP53 and TP73 by targeting them to the 26S proteasome for degradation. In turn, DNA damage and chromosomal instabilities increase and lead to cell proliferation and cancer development. The complex E6/E6AP targets several other substrates to degradation via the proteasome including host DLG1 or NFX1, a repressor of human telomerase reverse transcriptase (hTERT). The resulting increased expression of hTERT prevents the shortening of telomere length leading to cell immortalization. Other cellular targets including BAK1, Fas-associated death domain-containing protein (FADD) and procaspase 8, are degraded by E6/E6AP causing inhibition of apoptosis. E6 also inhibits immune response by interacting with host IRF3 and TYK2. These interactions prevent IRF3 transcriptional activities and inhibit TYK2-mediated JAK-STAT activation by interferon alpha resulting in inhibition of the interferon signaling pathway. The chain is Protein E6 from Human papillomavirus 31.